Reading from the N-terminus, the 222-residue chain is Interleukin-12 subunit alpha (222 aa).

The N-terminal stretch at methionine 1–alanine 25 is a signal peptide. 3 disulfides stabilise this stretch: cysteine 40–cysteine 113, cysteine 67–cysteine 199, and cysteine 88–cysteine 126. Asparagine 42, asparagine 96, asparagine 110, and asparagine 183 each carry an N-linked (GlcNAc...) asparagine glycan.

The protein belongs to the IL-6 superfamily. As to quaternary structure, heterodimer with IL12B; disulfide-linked. This heterodimer is known as interleukin IL-12. Heterodimer with EBI3/IL27B; not disulfide-linked. This heterodimer is known as interleukin IL-35. Interacts with NBR1; this interaction promotes IL-12 secretion.

Its subcellular location is the secreted. Heterodimerizes with IL12B to form the IL-12 cytokine or with EBI3/IL27B to form the IL-35 cytokine. IL-12 is primarily produced by professional antigen-presenting cells (APCs) such as B-cells and dendritic cells (DCs) as well as macrophages and granulocytes and regulates T-cell and natural killer-cell responses, induces the production of interferon-gamma (IFN-gamma), favors the differentiation of T-helper 1 (Th1) cells and is an important link between innate resistance and adaptive immunity. Mechanistically, exerts its biological effects through a receptor composed of IL12R1 and IL12R2 subunits. Binding to the receptor results in the rapid tyrosine phosphorylation of a number of cellular substrates including the JAK family kinases TYK2 and JAK2. In turn, recruited STAT4 gets phosphorylated and translocates to the nucleus where it regulates cytokine/growth factor responsive genes. As part of IL-35, plays essential roles in maintaining the immune homeostasis of the liver microenvironment and also functions as an immune-suppressive cytokine. Mediates biological events through unconventional receptors composed of IL12RB2 and gp130/IL6ST heterodimers or homodimers. Signaling requires the transcription factors STAT1 and STAT4, which form a unique heterodimer that binds to distinct DNA sites. This Felis catus (Cat) protein is Interleukin-12 subunit alpha (IL12A).